A 447-amino-acid polypeptide reads, in one-letter code: M-phase inducer phosphatase 3 (447 aa).

Serine 2 carries the N-acetylserine modification. A phosphoserine mark is found at serine 20, serine 38, serine 56, serine 60, and serine 63. Threonine 66 is modified (phosphothreonine; by CDK1). The segment covering 81–90 (MSASPLTTSA) has biased composition (polar residues). The segment at 81-109 (MSASPLTTSADLEDNGSLDSSGPLDRQLT) is disordered. At serine 128 the chain carries Phosphoserine. The residue at position 129 (threonine 129) is a Phosphothreonine. Serine 192 carries the post-translational modification Phosphoserine; by CDK1. Phosphoserine; by PLK3 occurs at positions 213 and 220. Residues 294–401 (VIERFYIIDC…FFPEYMELCD (108 aa)) form the Rhodanese domain. Residue cysteine 350 is part of the active site. The residue at position 445 (serine 445) is a Phosphoserine.

Belongs to the MPI phosphatase family. Interacts with MAPK14 and 14-3-3 proteins. When phosphorylated on Ser-128 and/or Thr-129, interacts with PLK1. Interacts with MARK3/C-TAK1. In terms of processing, phosphorylated by PLK4. Phosphorylated by PLK1, leading to activate the phosphatase activity. Phosphorylated by CHEK1 and MAPKAPK2. This phosphorylation creates a binding site for 14-3-3 protein and inhibits the phosphatase activity. Phosphorylation by PLK3 at Ser-213 promotes nuclear translocation. Ser-220 is a minor phosphorylation site. Phosphorylation by CDK1 occurs at G2 and G2-M transition and leads to increased activity. Spleen and thymus.

The protein localises to the nucleus. It catalyses the reaction O-phospho-L-tyrosyl-[protein] + H2O = L-tyrosyl-[protein] + phosphate. Its function is as follows. Functions as a dosage-dependent inducer in mitotic control. Tyrosine protein phosphatase required for progression of the cell cycle. When phosphorylated, highly effective in activating G2 cells into prophase. Directly dephosphorylates CDK1 and activates its kinase activity. The chain is M-phase inducer phosphatase 3 (Cdc25c) from Mus musculus (Mouse).